The chain runs to 390 residues: Protein-glutamate methylesterase/protein-glutamine glutaminase (390 aa).

One can recognise a Response regulatory domain in the interval 4–121 (RALVVDDSGF…SGDMEQVKRQ (118 aa)). The residue at position 55 (D55) is a 4-aspartylphosphate. The interval 130-198 (GGGRGAPAGR…AAPAPERGQR (69 aa)) is disordered. Low complexity-rich tracts occupy residues 136–148 (PAGRAPRPAAPVD) and 179–193 (EAPVAPTGAPAAPAP). Residues 201–390 (PGALRLVVIG…QVGEELAKLR (190 aa)) form the CheB-type methylesterase domain. Catalysis depends on residues S212, H239, and D335.

The protein belongs to the CheB family. Post-translationally, phosphorylated by CheA. Phosphorylation of the N-terminal regulatory domain activates the methylesterase activity.

The protein localises to the cytoplasm. The catalysed reaction is [protein]-L-glutamate 5-O-methyl ester + H2O = L-glutamyl-[protein] + methanol + H(+). It catalyses the reaction L-glutaminyl-[protein] + H2O = L-glutamyl-[protein] + NH4(+). Its function is as follows. Involved in chemotaxis. Part of a chemotaxis signal transduction system that modulates chemotaxis in response to various stimuli. Catalyzes the demethylation of specific methylglutamate residues introduced into the chemoreceptors (methyl-accepting chemotaxis proteins or MCP) by CheR. Also mediates the irreversible deamidation of specific glutamine residues to glutamic acid. The sequence is that of Protein-glutamate methylesterase/protein-glutamine glutaminase from Alkalilimnicola ehrlichii (strain ATCC BAA-1101 / DSM 17681 / MLHE-1).